The chain runs to 293 residues: 33 kDa chaperonin (293 aa).

Cystine bridges form between Cys-230/Cys-232 and Cys-263/Cys-266.

It belongs to the HSP33 family. Post-translationally, under oxidizing conditions two disulfide bonds are formed involving the reactive cysteines. Under reducing conditions zinc is bound to the reactive cysteines and the protein is inactive.

Its subcellular location is the cytoplasm. In terms of biological role, redox regulated molecular chaperone. Protects both thermally unfolding and oxidatively damaged proteins from irreversible aggregation. Plays an important role in the bacterial defense system toward oxidative stress. The chain is 33 kDa chaperonin from Edwardsiella ictaluri (strain 93-146).